The following is a 356-amino-acid chain: MEVGVFIPIGNNGWLISENSPQYQPSFDLNKEIAQRAEAHGLDFLLSMIKLRGFGGKTEFWEYNLESFTLMAGLASVTERIKLFATCATLLIPPAYAARMCNTIDSISHGRFGLNLITGWQRPEYSQMGMWPGDEHFARRYDMLSEYAHILRELWEKGESSFQGEFYQMEDCRVRPQPQGDMKLICAGSSDAGLAFSAKYADYAFCLGKGVNTPTAFAGNNERLAAATAKTGRDVSIYVLMMVIAAETDDEAMDKWMHYRAGVDEEAVAWLGNQGAADKTSDTTNVRQLAARESAVNLNMGTLVGSYENIARMLDEVATVPNTGGVLLVFDDFVAGVETFGTRIQPLMKTRQHTAG.

FMN contacts are provided by residues 49–50, N115, E124, 140–141, and S190; these read IK and RY.

It belongs to the NtaA/SnaA/DszA monooxygenase family. RutA subfamily.

The enzyme catalyses uracil + FMNH2 + NADH + O2 = (Z)-3-ureidoacrylate + FMN + NAD(+) + H2O + H(+). It catalyses the reaction thymine + FMNH2 + NADH + O2 = (Z)-2-methylureidoacrylate + FMN + NAD(+) + H2O + H(+). In terms of biological role, catalyzes the pyrimidine ring opening between N-3 and C-4 by an unusual flavin hydroperoxide-catalyzed mechanism, adding oxygen atoms in the process to yield ureidoacrylate peracid, that immediately reacts with FMN forming ureidoacrylate and FMN-N(5)-oxide. The FMN-N(5)-oxide reacts spontaneously with NADH to produce FMN. Requires the flavin reductase RutF to regenerate FMN in vivo. The chain is Pyrimidine monooxygenase RutA from Haliangium ochraceum (strain DSM 14365 / JCM 11303 / SMP-2).